A 76-amino-acid polypeptide reads, in one-letter code: Small ribosomal subunit protein bS18 (76 aa).

Belongs to the bacterial ribosomal protein bS18 family. As to quaternary structure, part of the 30S ribosomal subunit. Forms a tight heterodimer with protein bS6.

Its function is as follows. Binds as a heterodimer with protein bS6 to the central domain of the 16S rRNA, where it helps stabilize the platform of the 30S subunit. The chain is Small ribosomal subunit protein bS18 from Nitrosomonas europaea (strain ATCC 19718 / CIP 103999 / KCTC 2705 / NBRC 14298).